A 338-amino-acid chain; its full sequence is Large ribosomal subunit protein uL3 (338 aa).

The segment at 1–37 (MPQPSRPRKGSMGFSPRKRAESEVPRIRSWASNDGAP) is disordered.

It belongs to the universal ribosomal protein uL3 family. In terms of assembly, part of the 50S ribosomal subunit. Forms a cluster with proteins L14 and L24e.

Functionally, one of the primary rRNA binding proteins, it binds directly near the 3'-end of the 23S rRNA, where it nucleates assembly of the 50S subunit. The protein is Large ribosomal subunit protein uL3 of Haloquadratum walsbyi (strain DSM 16790 / HBSQ001).